Consider the following 321-residue polypeptide: 4-hydroxy-3-methylbut-2-enyl diphosphate reductase (321 aa).

Position 13 (Cys-13) interacts with [4Fe-4S] cluster. His-41 and His-75 together coordinate (2E)-4-hydroxy-3-methylbut-2-enyl diphosphate. Residues His-41 and His-75 each coordinate dimethylallyl diphosphate. Isopentenyl diphosphate-binding residues include His-41 and His-75. Residue Cys-97 participates in [4Fe-4S] cluster binding. Residue His-125 coordinates (2E)-4-hydroxy-3-methylbut-2-enyl diphosphate. Dimethylallyl diphosphate is bound at residue His-125. Position 125 (His-125) interacts with isopentenyl diphosphate. Glu-127 serves as the catalytic Proton donor. Thr-168 is a (2E)-4-hydroxy-3-methylbut-2-enyl diphosphate binding site. Cys-225 is a [4Fe-4S] cluster binding site. Residues Ser-253, Ser-254, Asn-255, and Ser-302 each contribute to the (2E)-4-hydroxy-3-methylbut-2-enyl diphosphate site. Residues Ser-253, Ser-254, Asn-255, and Ser-302 each coordinate dimethylallyl diphosphate. Isopentenyl diphosphate is bound by residues Ser-253, Ser-254, Asn-255, and Ser-302.

Belongs to the IspH family. The cofactor is [4Fe-4S] cluster.

The enzyme catalyses isopentenyl diphosphate + 2 oxidized [2Fe-2S]-[ferredoxin] + H2O = (2E)-4-hydroxy-3-methylbut-2-enyl diphosphate + 2 reduced [2Fe-2S]-[ferredoxin] + 2 H(+). It catalyses the reaction dimethylallyl diphosphate + 2 oxidized [2Fe-2S]-[ferredoxin] + H2O = (2E)-4-hydroxy-3-methylbut-2-enyl diphosphate + 2 reduced [2Fe-2S]-[ferredoxin] + 2 H(+). Its pathway is isoprenoid biosynthesis; dimethylallyl diphosphate biosynthesis; dimethylallyl diphosphate from (2E)-4-hydroxy-3-methylbutenyl diphosphate: step 1/1. It functions in the pathway isoprenoid biosynthesis; isopentenyl diphosphate biosynthesis via DXP pathway; isopentenyl diphosphate from 1-deoxy-D-xylulose 5-phosphate: step 6/6. In terms of biological role, catalyzes the conversion of 1-hydroxy-2-methyl-2-(E)-butenyl 4-diphosphate (HMBPP) into a mixture of isopentenyl diphosphate (IPP) and dimethylallyl diphosphate (DMAPP). Acts in the terminal step of the DOXP/MEP pathway for isoprenoid precursor biosynthesis. This chain is 4-hydroxy-3-methylbut-2-enyl diphosphate reductase, found in Pelodictyon phaeoclathratiforme (strain DSM 5477 / BU-1).